We begin with the raw amino-acid sequence, 113 residues long: MAELRAHRIAEQMKKELGEILSRKIKDPRVGFVTVTDVEVTGDLQQAKVYISVLGDEKKKQDTLLGLSKAKGFIRSEIGNRIRLRKTPEITFEFDEALEQGNRIETILRDLNK.

This sequence belongs to the RbfA family. In terms of assembly, monomer. Binds 30S ribosomal subunits, but not 50S ribosomal subunits or 70S ribosomes.

It is found in the cytoplasm. One of several proteins that assist in the late maturation steps of the functional core of the 30S ribosomal subunit. Associates with free 30S ribosomal subunits (but not with 30S subunits that are part of 70S ribosomes or polysomes). Required for efficient processing of 16S rRNA. May interact with the 5'-terminal helix region of 16S rRNA. In Oceanobacillus iheyensis (strain DSM 14371 / CIP 107618 / JCM 11309 / KCTC 3954 / HTE831), this protein is Ribosome-binding factor A.